The sequence spans 417 residues: MLRKLANQSLSVAGKWQQQQLRRLNIHEYQGAELMSKYGINVPKGVAVASLDEVKKAIQDVFPNQSEVVVKSQVLAGGRGLGTFKNGFQGGVHIVKADQAEDIASKMLGQILVTKQTGAQGKVVSKVYLCEKMSLVNEMYFSIILDRATAGPLIIACRKGGTSIEDLAEKFPDMIIKVPIDVFKGISDADAAKVVDGLAPKVADRNDSIEQVKKLYKLFCETDCTMLEINPLAETSDNKLVAADAKLNFDDNAAYRQKEIFSLRDSSQEDPREVAAAKADLNYIGLDGEIGCMVNGAGLAMATMDIIKLHGGTPANFLDVGGNATEGQVVEAFKILTADEKVKAILVNIFGGIMKCDVIASGIVNAAKQVQLKVPVIVRLEGTNVEQGKRILKESGMKLITAEDLDDAAEKAVKALA.

The transit peptide at 1–24 (MLRKLANQSLSVAGKWQQQQLRRL) directs the protein to the mitochondrion. The ATP-grasp domain maps to 32 to 275 (AELMSKYGIN…SSQEDPREVA (244 aa)). ATP is bound by residues Lys-71, 78–80 (GRG), and Glu-138. Asn-230 and Asp-244 together coordinate Mg(2+). Residues Asn-295 and 352-354 (GIM) each bind substrate.

It belongs to the succinate/malate CoA ligase beta subunit family. Heterodimer of an alpha and a beta subunit. Mg(2+) serves as cofactor. Expressed in roots, stems, flowers, leaves and fruits.

The protein localises to the mitochondrion. It carries out the reaction succinate + ATP + CoA = succinyl-CoA + ADP + phosphate. It participates in carbohydrate metabolism; tricarboxylic acid cycle; succinate from succinyl-CoA (ligase route): step 1/1. Succinyl-CoA synthetase functions in the citric acid cycle (TCA), coupling the hydrolysis of succinyl-CoA to the synthesis of ATP and thus represents the only step of substrate-level phosphorylation in the TCA. The beta subunit provides nucleotide specificity of the enzyme and binds the substrate succinate, while the binding sites for coenzyme A and phosphate are found in the alpha subunit. The protein is Succinate--CoA ligase [ADP-forming] subunit beta, mitochondrial of Solanum lycopersicum (Tomato).